The chain runs to 620 residues: Palmitoyltransferase ZDHHC17 (620 aa).

Over 1 to 292 the chain is Cytoplasmic; that stretch reads MADALVGYEK…LKMDKEFRQK (292 aa). 6 ANK repeats span residues 77–106, 111–140, 144–173, 177–207, 212–241, and 245–274; these read ENVT…IVDQ, LNST…DPSL, EGCS…DVDM, NGMT…SVNL, HKNT…NVDA, and KGET…AKGY. A run of 2 helical transmembrane segments spans residues 293–313 and 314–334; these read VMLG…DLDI and DSWL…QFLS. Topologically, residues 335 to 345 are cytoplasmic; that stretch reads KSFFDHSMHSA. A helical membrane pass occupies residues 346–366; it reads LPLGIYLATKFWMYITWFYWF. Topologically, residues 367 to 369 are lumenal; it reads WND. A helical membrane pass occupies residues 370–390; it reads LPFVTIHLPFLLNSLALFYNF. The Cytoplasmic portion of the chain corresponds to 391–469; it reads GKSWKSDPGI…NCVGSGNHRY (79 aa). Residues 425-475 form the DHHC domain; it reads IFCSTCLIRKPIRSKHCAVCNRCIAKFDHHCPWVGNCVGSGNHRYFMGYLF. The S-palmitoyl cysteine intermediate role is filled by Cys455. Residues 470–490 form a helical membrane-spanning segment; sequence FMGYLFFLLCMICWMMYGCIC. The Lumenal portion of the chain corresponds to 491 to 504; that stretch reads YWRIHCATSYTKDG. A helical membrane pass occupies residues 505–524; it reads FWIYITQIATCSPWMFWMFL. Residues 525 to 620 are Cytoplasmic-facing; that stretch reads NSVFHFMWVA…QTSGSGYQLV (96 aa).

Belongs to the DHHC palmitoyltransferase family. AKR/ZDHHC17 subfamily. In terms of processing, autopalmitoylated.

It is found in the golgi apparatus membrane. The protein resides in the cytoplasmic vesicle membrane. Its subcellular location is the presynaptic cell membrane. It catalyses the reaction L-cysteinyl-[protein] + hexadecanoyl-CoA = S-hexadecanoyl-L-cysteinyl-[protein] + CoA. The enzyme catalyses L-cysteinyl-[protein] + tetradecanoyl-CoA = S-tetradecanoyl-L-cysteinyl-[protein] + CoA. The catalysed reaction is L-cysteinyl-[protein] + octadecanoyl-CoA = S-octadecanoyl-L-cysteinyl-[protein] + CoA. In terms of biological role, palmitoyltransferase that catalyzes the addition of palmitate onto various protein substrates and is involved in a variety of cellular processes. Has no stringent fatty acid selectivity and in addition to palmitate can also transfer onto target proteins myristate from tetradecanoyl-CoA and stearate from octadecanoyl-CoA. Plays a role in axonogenesis. The polypeptide is Palmitoyltransferase ZDHHC17 (Danio rerio (Zebrafish)).